The chain runs to 81 residues: Sulfur carrier protein TusA (81 aa).

The Cysteine persulfide intermediate role is filled by C19.

The protein belongs to the sulfur carrier protein TusA family.

Its subcellular location is the cytoplasm. Functionally, sulfur carrier protein which probably makes part of a sulfur-relay system. The chain is Sulfur carrier protein TusA from Shewanella sp. (strain MR-4).